The following is a 172-amino-acid chain: RNA pyrophosphohydrolase (172 aa).

The Nudix hydrolase domain occupies G6–K149. A Nudix box motif is present at residues G38–G59.

This sequence belongs to the Nudix hydrolase family. RppH subfamily. The cofactor is a divalent metal cation.

In terms of biological role, accelerates the degradation of transcripts by removing pyrophosphate from the 5'-end of triphosphorylated RNA, leading to a more labile monophosphorylated state that can stimulate subsequent ribonuclease cleavage. The polypeptide is RNA pyrophosphohydrolase (Shewanella denitrificans (strain OS217 / ATCC BAA-1090 / DSM 15013)).